Here is a 303-residue protein sequence, read N- to C-terminus: Uricase (303 aa).

Residues K12 and T60 each act as charge relay system in the active site. Urate is bound by residues T60, D61, F162, R179, V234, Q235, and N261. H263 serves as the catalytic Charge relay system. Residues 301–303 carry the Microbody targeting signal motif; it reads TKL.

This sequence belongs to the uricase family.

The protein localises to the peroxisome. The catalysed reaction is urate + O2 + H2O = 5-hydroxyisourate + H2O2. The protein operates within purine metabolism; urate degradation; (S)-allantoin from urate: step 1/3. Catalyzes the oxidation of uric acid to 5-hydroxyisourate, which is further processed to form (S)-allantoin. This Cyberlindnera jadinii (Torula yeast) protein is Uricase.